The chain runs to 344 residues: Adenosine kinase (344 aa).

The active site involves Asp-298.

This sequence belongs to the carbohydrate kinase PfkB family. Mg(2+) is required as a cofactor.

The catalysed reaction is adenosine + ATP = AMP + ADP + H(+). It participates in purine metabolism; AMP biosynthesis via salvage pathway; AMP from adenosine: step 1/1. This chain is Adenosine kinase (ADK), found in Schizophyllum commune (Split gill fungus).